We begin with the raw amino-acid sequence, 175 residues long: uncharacterized protein (175 aa).

Residues 143–166 (TCFLFCAFVTSIFIETDYSIFFLL) traverse the membrane as a helical segment.

Its subcellular location is the membrane. This is an uncharacterized protein from Saccharomyces cerevisiae (strain ATCC 204508 / S288c) (Baker's yeast).